Consider the following 551-residue polypeptide: 2,3-bisphosphoglycerate-independent phosphoglycerate mutase (551 aa).

Mn(2+) is bound by residues D22 and S74. S74 serves as the catalytic Phosphoserine intermediate. Substrate-binding positions include H135, 165 to 166 (RD), R201, R208, and 281 to 284 (RGDR). D319 provides a ligand contact to Mn(2+). A substrate-binding site is contributed by K356. 5 residues coordinate Mn(2+): D424, H428, D465, H466, and H495.

The protein belongs to the BPG-independent phosphoglycerate mutase family. Monomer. Mn(2+) is required as a cofactor.

The protein localises to the cytoplasm. It carries out the reaction (2R)-2-phosphoglycerate = (2R)-3-phosphoglycerate. The protein operates within carbohydrate degradation; glycolysis; pyruvate from D-glyceraldehyde 3-phosphate: step 3/5. Functionally, catalyzes the interconversion of 2-phosphoglycerate (2-PGA) and 3-phosphoglycerate (3-PGA). This chain is 2,3-bisphosphoglycerate-independent phosphoglycerate mutase, found in Trypanosoma brucei brucei (strain 927/4 GUTat10.1).